We begin with the raw amino-acid sequence, 351 residues long: Dihydroorotate dehydrogenase (quinone) (351 aa).

Residues Ala-67–Lys-71 and Thr-91 contribute to the FMN site. Substrate is bound at residue Lys-71. Asn-116 to Phe-120 serves as a coordination point for substrate. 2 residues coordinate FMN: Asn-145 and Asn-178. Residue Asn-178 coordinates substrate. Residue Ser-181 is the Nucleophile of the active site. Asn-183 provides a ligand contact to substrate. FMN is bound by residues Lys-214 and Thr-242. Asn-243–Thr-244 lines the substrate pocket. Residues Gly-262, Gly-291, and Tyr-312 to Ser-313 contribute to the FMN site.

The protein belongs to the dihydroorotate dehydrogenase family. Type 2 subfamily. In terms of assembly, monomer. It depends on FMN as a cofactor.

It is found in the cell membrane. It catalyses the reaction (S)-dihydroorotate + a quinone = orotate + a quinol. The protein operates within pyrimidine metabolism; UMP biosynthesis via de novo pathway; orotate from (S)-dihydroorotate (quinone route): step 1/1. In terms of biological role, catalyzes the conversion of dihydroorotate to orotate with quinone as electron acceptor. The chain is Dihydroorotate dehydrogenase (quinone) (pyrD) from Helicobacter pylori (strain J99 / ATCC 700824) (Campylobacter pylori J99).